A 417-amino-acid polypeptide reads, in one-letter code: MNTDIANQLRAAKKATTDLNLIQSDTRTIILETLAANLEKHIENIIQENQKDLSLMLEQDPRYDRLLLNKERILSLANDVRKVASLPNPLGVSLLEKSMPNGLSIKKITVPLGVIAVIYESRPNVTIDIFSLCFKSGNVCILKGGKEAHFTNSYLLLLIKNTLKNFNINTDIVCLLPPERALMTQLLNATGLVDLCIPRGSQNLINFVRDNAKIPVIETGAGIVHTYFDKSGDLGKGKKIINNAKTRRVSVCNALDTLIIHADRLKDLPELVETLSQKHVIIYADQDAYHVLDKNYPEQLLIKAKPQDFGHEFLDYKLAIKTVPNIKAAIGHIQQFSSHHSEAIIAEDESAIDQFLIEVDAAAVYANASTAFTDGGEFGLGAEIGISTQKVHARGPMGLEALTSYKWVIRGTGQIRD.

It belongs to the gamma-glutamyl phosphate reductase family.

It is found in the cytoplasm. It carries out the reaction L-glutamate 5-semialdehyde + phosphate + NADP(+) = L-glutamyl 5-phosphate + NADPH + H(+). It functions in the pathway amino-acid biosynthesis; L-proline biosynthesis; L-glutamate 5-semialdehyde from L-glutamate: step 2/2. Catalyzes the NADPH-dependent reduction of L-glutamate 5-phosphate into L-glutamate 5-semialdehyde and phosphate. The product spontaneously undergoes cyclization to form 1-pyrroline-5-carboxylate. The polypeptide is Gamma-glutamyl phosphate reductase (Legionella pneumophila (strain Lens)).